Reading from the N-terminus, the 147-residue chain is Peptide methionine sulfoxide reductase MsrA (147 aa).

C10 is an active-site residue.

It belongs to the MsrA Met sulfoxide reductase family.

It catalyses the reaction L-methionyl-[protein] + [thioredoxin]-disulfide + H2O = L-methionyl-(S)-S-oxide-[protein] + [thioredoxin]-dithiol. The enzyme catalyses [thioredoxin]-disulfide + L-methionine + H2O = L-methionine (S)-S-oxide + [thioredoxin]-dithiol. Its function is as follows. Has an important function as a repair enzyme for proteins that have been inactivated by oxidation. Catalyzes the reversible oxidation-reduction of methionine sulfoxide in proteins to methionine. The polypeptide is Peptide methionine sulfoxide reductase MsrA (Pelagibacter ubique (strain HTCC1062)).